A 240-amino-acid chain; its full sequence is Ribose-5-phosphate isomerase (240 aa).

Substrate contacts are provided by residues 34 to 37 (SGST), 88 to 91 (DGAD), and 101 to 104 (KGGG). Residue E110 is the Proton acceptor of the active site. K128 contacts substrate.

Belongs to the ribose 5-phosphate isomerase family.

Its subcellular location is the cytoplasm. The enzyme catalyses aldehydo-D-ribose 5-phosphate = D-ribulose 5-phosphate. It functions in the pathway carbohydrate degradation; pentose phosphate pathway; D-ribose 5-phosphate from D-ribulose 5-phosphate (non-oxidative stage): step 1/1. Its function is as follows. Involved in the first step of the non-oxidative branch of the pentose phosphate pathway. It catalyzes the reversible conversion of ribose-5-phosphate to ribulose 5-phosphate. This Candida albicans (strain SC5314 / ATCC MYA-2876) (Yeast) protein is Ribose-5-phosphate isomerase (RKI1).